The sequence spans 317 residues: Methionyl-tRNA formyltransferase (317 aa).

110–113 (SLLP) contacts (6S)-5,6,7,8-tetrahydrofolate.

It belongs to the Fmt family.

The catalysed reaction is L-methionyl-tRNA(fMet) + (6R)-10-formyltetrahydrofolate = N-formyl-L-methionyl-tRNA(fMet) + (6S)-5,6,7,8-tetrahydrofolate + H(+). Functionally, attaches a formyl group to the free amino group of methionyl-tRNA(fMet). The formyl group appears to play a dual role in the initiator identity of N-formylmethionyl-tRNA by promoting its recognition by IF2 and preventing the misappropriation of this tRNA by the elongation apparatus. This Bacillus subtilis (strain 168) protein is Methionyl-tRNA formyltransferase.